The following is a 319-amino-acid chain: Cytochrome c biogenesis protein CcsA (319 aa).

The next 8 membrane-spanning stretches (helical) occupy residues Val-11 to Phe-31, Ile-34 to Leu-54, Leu-71 to Ser-91, Leu-97 to Leu-117, Ile-142 to Ile-162, Ile-227 to Asn-247, Trp-254 to Leu-274, and Ala-288 to Leu-308.

The protein belongs to the CcmF/CycK/Ccl1/NrfE/CcsA family. In terms of assembly, may interact with Ccs1.

The protein resides in the plastid. Its subcellular location is the chloroplast thylakoid membrane. Its function is as follows. Required during biogenesis of c-type cytochromes (cytochrome c6 and cytochrome f) at the step of heme attachment. This Porphyra purpurea (Red seaweed) protein is Cytochrome c biogenesis protein CcsA.